Consider the following 223-residue polypeptide: 26S proteasome non-ATPase regulatory subunit 9 (223 aa).

A compositionally biased stretch (basic and acidic residues) spans 103–121 (RDKEKQARDMAEAHKEAMS). The segment at 103–141 (RDKEKQARDMAEAHKEAMSRKLGQSESQGPPRAFAKVNS) is disordered. A PDZ domain is found at 108–195 (QARDMAEAHK…KPLNVTVIRR (88 aa)). The residue at position 129 (S129) is a Phosphoserine.

Belongs to the proteasome subunit p27 family. In terms of assembly, interacts with PSMC3. Part of a transient complex (modulator) containing PSMD9, PSMC6 and PSMC3 formed during the assembly of the 26S proteasome. In terms of tissue distribution, expressed in all tissues tested, highly expressed in liver and kidney.

In terms of biological role, acts as a chaperone during the assembly of the 26S proteasome, specifically of the base subcomplex of the PA700/19S regulatory complex (RC). During the base subcomplex assembly is part of an intermediate PSMD9:PSMC6:PSMC3 module, also known as modulator trimer complex; PSMD9 is released during the further base assembly process. This chain is 26S proteasome non-ATPase regulatory subunit 9 (PSMD9), found in Homo sapiens (Human).